The chain runs to 189 residues: Tumor protein p53-inducible protein 11 (189 aa).

Residues Met1–Arg63 lie on the Cytoplasmic side of the membrane. The residue at position 14 (Ser14) is a Phosphoserine. The helical transmembrane segment at Val64–Pro84 threads the bilayer. Residues Asp85–Gly108 are Extracellular-facing. The helical transmembrane segment at Ala109–Ile129 threads the bilayer. Residue Arg130 is a topological domain, cytoplasmic. The helical transmembrane segment at Trp131–Leu151 threads the bilayer. Over Ala152–Gln159 the chain is Extracellular. Residues Gly160 to Tyr180 traverse the membrane as a helical segment. Residues Gln181–Val189 lie on the Cytoplasmic side of the membrane.

Its subcellular location is the membrane. The protein is Tumor protein p53-inducible protein 11 (TP53I11) of Bos taurus (Bovine).